A 474-amino-acid polypeptide reads, in one-letter code: Cyclin-dependent kinase 18 (474 aa).

Serine 14, serine 74, serine 89, serine 98, serine 117, and serine 132 each carry phosphoserine. The interval 44-93 is disordered; sequence NLQLGPLGRDPPQECSTFSPTDSGEEPGQLSPGVQFQRRQNQRRFSMEDV. A Protein kinase domain is found at 144–425; that stretch reads YVKLDKLGEG…AEAALSHSYF (282 aa). Residues 150–158 and lysine 173 each bind ATP; that span reads LGEGTYATV. The Proton acceptor role is filled by aspartate 265. A phosphoserine mark is found at serine 440 and serine 443.

This sequence belongs to the protein kinase superfamily. CMGC Ser/Thr protein kinase family. CDC2/CDKX subfamily. As to expression, isoform 2 expression is limited to several subcortical nuclei of the basal gangli and the spinal cord. Isoform 1 is widely expressed.

It catalyses the reaction L-seryl-[protein] + ATP = O-phospho-L-seryl-[protein] + ADP + H(+). The catalysed reaction is L-threonyl-[protein] + ATP = O-phospho-L-threonyl-[protein] + ADP + H(+). In terms of biological role, may play a role in signal transduction cascades in terminally differentiated cells. This Homo sapiens (Human) protein is Cyclin-dependent kinase 18 (CDK18).